We begin with the raw amino-acid sequence, 243 residues long: Ribonuclease 3 (243 aa).

The region spanning 15 to 144 (NDTISKIINY…LIGAIYIDGG (130 aa)) is the RNase III domain. Residue Glu57 participates in Mg(2+) binding. Asp61 is a catalytic residue. Residues Asn130 and Glu133 each coordinate Mg(2+). Residue Glu133 is part of the active site. Residues 169–238 (DPKTSLQEWT…AELMLEKINN (70 aa)) enclose the DRBM domain.

Belongs to the ribonuclease III family. In terms of assembly, homodimer. It depends on Mg(2+) as a cofactor.

It localises to the cytoplasm. The enzyme catalyses Endonucleolytic cleavage to 5'-phosphomonoester.. Functionally, digests double-stranded RNA. Involved in the processing of primary rRNA transcript to yield the immediate precursors to the large and small rRNAs (23S and 16S). Processes some mRNAs, and tRNAs when they are encoded in the rRNA operon. Processes pre-crRNA and tracrRNA of type II CRISPR loci if present in the organism. The sequence is that of Ribonuclease 3 from Wolbachia sp. subsp. Brugia malayi (strain TRS).